A 257-amino-acid chain; its full sequence is MLILVSPAKTLDFEQPPLTQTHTRPDFLAYSQELIQVCQRLTPSDIATLMKVSDNIAGLNAARFGEWTPDYSIDNAKQAIFAFRGDVYTGFDADTLTPEQLERTQSQLRILSGLYGLLRPLDLILPYRLEMGTALANPKGKNLYDFWGNTLTEAVNNAVAAQGDDIIINLASNEYFKAIKRKQLAGQLITPVFKDFKNGQYKVISFFAKKARGMMARYIIDQQVSSIEELKAFDVAGYYYSEELSKPNEPTFLREAQ.

Belongs to the UPF0246 family.

This chain is UPF0246 protein Shewana3_3143, found in Shewanella sp. (strain ANA-3).